The primary structure comprises 213 residues: Putative manganese efflux pump MntP (213 aa).

6 helical membrane passes run I3–A23, A36–G56, A67–E87, L130–I150, I152–I172, and I187–I207.

Belongs to the MntP (TC 9.B.29) family.

It is found in the cell membrane. In terms of biological role, probably functions as a manganese efflux pump. The chain is Putative manganese efflux pump MntP from Clostridium perfringens (strain SM101 / Type A).